We begin with the raw amino-acid sequence, 344 residues long: Phosphoribosylformylglycinamidine cyclo-ligase (344 aa).

Belongs to the AIR synthase family.

Its subcellular location is the cytoplasm. The enzyme catalyses 2-formamido-N(1)-(5-O-phospho-beta-D-ribosyl)acetamidine + ATP = 5-amino-1-(5-phospho-beta-D-ribosyl)imidazole + ADP + phosphate + H(+). It functions in the pathway purine metabolism; IMP biosynthesis via de novo pathway; 5-amino-1-(5-phospho-D-ribosyl)imidazole from N(2)-formyl-N(1)-(5-phospho-D-ribosyl)glycinamide: step 2/2. The sequence is that of Phosphoribosylformylglycinamidine cyclo-ligase from Exiguobacterium sibiricum (strain DSM 17290 / CCUG 55495 / CIP 109462 / JCM 13490 / 255-15).